The primary structure comprises 272 residues: 3-methyl-2-oxobutanoate hydroxymethyltransferase (272 aa).

Mg(2+) contacts are provided by D52 and D91. 3-methyl-2-oxobutanoate is bound by residues 52 to 53 (DS), D91, and K121. E123 is a Mg(2+) binding site. E190 serves as the catalytic Proton acceptor.

This sequence belongs to the PanB family. Homodecamer; pentamer of dimers. Requires Mg(2+) as cofactor.

The protein resides in the cytoplasm. The catalysed reaction is 3-methyl-2-oxobutanoate + (6R)-5,10-methylene-5,6,7,8-tetrahydrofolate + H2O = 2-dehydropantoate + (6S)-5,6,7,8-tetrahydrofolate. The protein operates within cofactor biosynthesis; (R)-pantothenate biosynthesis; (R)-pantoate from 3-methyl-2-oxobutanoate: step 1/2. Its function is as follows. Catalyzes the reversible reaction in which hydroxymethyl group from 5,10-methylenetetrahydrofolate is transferred onto alpha-ketoisovalerate to form ketopantoate. In Flavobacterium johnsoniae (strain ATCC 17061 / DSM 2064 / JCM 8514 / BCRC 14874 / CCUG 350202 / NBRC 14942 / NCIMB 11054 / UW101) (Cytophaga johnsonae), this protein is 3-methyl-2-oxobutanoate hydroxymethyltransferase.